The sequence spans 291 residues: GCN5-related N-acetyltransferase 4, chloroplastic (291 aa).

Residues 1-61 (MRSTPLGTTA…PSQINSGACN (61 aa)) constitute a chloroplast transit peptide. An N-acetyltransferase domain is found at 76-280 (IVVREARLED…RFTFMMKLVN (205 aa)). Acetyl-CoA-binding positions include 199 to 201 (VAV) and 207 to 212 (RKGIAK). Lys217 is modified (N6-acetyllysine). Acetyl-CoA-binding positions include 238 to 240 (NLG) and Tyr245. The active-site Proton donor is Tyr245. N6-acetyllysine occurs at positions 254 and 265.

This sequence belongs to the acetyltransferase family. GNAT subfamily. Oligomer. Post-translationally, autoacetylated at K-217, K-254 and K-265. Expressed in green tissues.

It is found in the plastid. The protein resides in the chloroplast. It catalyses the reaction an N-terminal L-alpha-aminoacyl-[protein] + acetyl-CoA = N-terminal N(alpha)-acetyl-L-alpha-aminoacyl-[protein] + CoA + H(+). The catalysed reaction is L-lysyl-[protein] + acetyl-CoA = N(6)-acetyl-L-lysyl-[protein] + CoA + H(+). It carries out the reaction N-terminal L-alanyl-[protein] + acetyl-CoA = N-terminal N(alpha)-acetyl-L-alanyl-[protein] + CoA + H(+). The enzyme catalyses N-terminal L-seryl-[protein] + acetyl-CoA = N-terminal N(alpha)-acetyl-L-seryl-[protein] + CoA + H(+). It catalyses the reaction N-terminal L-threonyl-[protein] + acetyl-CoA = N-terminal N(alpha)-acetyl-L-threonyl-[protein] + CoA + H(+). The catalysed reaction is N-terminal L-methionyl-[protein] + acetyl-CoA = N-terminal N(alpha)-acetyl-L-methionyl-[protein] + CoA + H(+). It carries out the reaction N-terminal L-valyl-[protein] + acetyl-CoA = N-terminal N(alpha)-acetyl-L-valyl-[protein] + CoA + H(+). The enzyme catalyses N-terminal glycyl-[protein] + acetyl-CoA = N-terminal N(alpha)-acetylglycyl-[protein] + CoA + H(+). Functionally, protein acetyltransferase with dual specificity triggering both N-alpha-acetylation (NTA), with a large spectrum of modified N-termini, including methionine, alanine, serine, threonine and to a lower extent glycine and valine as substrates, and epsilon-lysine acetylation (KA) of several plastid proteins. The sequence is that of GCN5-related N-acetyltransferase 4, chloroplastic from Arabidopsis thaliana (Mouse-ear cress).